The following is a 191-amino-acid chain: Fe/S biogenesis protein NfuA (191 aa).

Residues cysteine 149 and cysteine 152 each contribute to the [4Fe-4S] cluster site.

This sequence belongs to the NfuA family. As to quaternary structure, homodimer. The cofactor is [4Fe-4S] cluster.

Its function is as follows. Involved in iron-sulfur cluster biogenesis. Binds a 4Fe-4S cluster, can transfer this cluster to apoproteins, and thereby intervenes in the maturation of Fe/S proteins. Could also act as a scaffold/chaperone for damaged Fe/S proteins. The protein is Fe/S biogenesis protein NfuA of Yersinia pseudotuberculosis serotype O:1b (strain IP 31758).